The chain runs to 181 residues: Secreted chorismate mutase (181 aa).

Positions 1–20 are cleaved as a signal peptide; the sequence is MLASVALAALAGVGTPHATA. The 80-residue stretch at 21–100 folds into the Chorismate mutase domain; that stretch reads DDASPLVPLV…ATSSVEHTRF (80 aa). Residues Arg-36, Lys-47, Asp-56, 59 to 63, 92 to 96, and Arg-121 each bind substrate; these read REQQV and TSSVE. An intrachain disulfide couples Cys-147 to Cys-180.

In terms of assembly, homodimer.

The protein localises to the secreted. The catalysed reaction is chorismate = prephenate. It functions in the pathway metabolic intermediate biosynthesis; prephenate biosynthesis; prephenate from chorismate: step 1/1. Functionally, catalyzes the Claisen rearrangement of chorismate to prephenate. May play some role in the pathogenicity. This is Secreted chorismate mutase from Mycolicibacterium smegmatis (strain ATCC 700084 / mc(2)155) (Mycobacterium smegmatis).